The sequence spans 183 residues: MSRKARDPIVLPQGVEVSIQNDEISVKGPKGSLTQVLAKEVEIAVKGNEVFVSPAAHIIDRPGRMQGLYWALIANMVKGVHLGFEKRLEMIGVGFRASVQGSFLDLSIGVSHPTKMPIPTGLEVSVEKNTLISIKGINKQLVGEFAACVRAKRPPEPYKGKGIRYENEYVRRKAGKAAKTGKK.

This sequence belongs to the universal ribosomal protein uL6 family. Part of the 50S ribosomal subunit.

Functionally, this protein binds to the 23S rRNA, and is important in its secondary structure. It is located near the subunit interface in the base of the L7/L12 stalk, and near the tRNA binding site of the peptidyltransferase center. This chain is Large ribosomal subunit protein uL6, found in Chlamydia muridarum (strain MoPn / Nigg).